Consider the following 146-residue polypeptide: Large ribosomal subunit protein bL17 (146 aa).

A compositionally biased stretch (low complexity) spans 124–134 (EASRATRAAAS). Residues 124–146 (EASRATRAAASKKAEEEAASEAE) are disordered.

Belongs to the bacterial ribosomal protein bL17 family. Part of the 50S ribosomal subunit. Contacts protein L32.

In Corynebacterium kroppenstedtii (strain DSM 44385 / JCM 11950 / CIP 105744 / CCUG 35717), this protein is Large ribosomal subunit protein bL17.